The following is a 173-amino-acid chain: Large ribosomal RNA subunit accumulation protein YceD (173 aa).

The protein belongs to the DUF177 domain family.

Functionally, plays a role in synthesis, processing and/or stability of 23S rRNA. The chain is Large ribosomal RNA subunit accumulation protein YceD (yceD) from Escherichia coli O157:H7.